A 234-amino-acid chain; its full sequence is Carboxy-S-adenosyl-L-methionine synthase (234 aa).

Residues Tyr-35, 60–62, 83–84, and Arg-191 contribute to the S-adenosyl-L-methionine site; these read GCS and DN.

Belongs to the class I-like SAM-binding methyltransferase superfamily. Cx-SAM synthase family. As to quaternary structure, homodimer.

It catalyses the reaction prephenate + S-adenosyl-L-methionine = carboxy-S-adenosyl-L-methionine + 3-phenylpyruvate + H2O. In terms of biological role, catalyzes the conversion of S-adenosyl-L-methionine (SAM) to carboxy-S-adenosyl-L-methionine (Cx-SAM). This Campylobacter lari (strain RM2100 / D67 / ATCC BAA-1060) protein is Carboxy-S-adenosyl-L-methionine synthase.